Here is a 122-residue protein sequence, read N- to C-terminus: Large ribosomal subunit protein bL12 (122 aa).

Belongs to the bacterial ribosomal protein bL12 family. In terms of assembly, homodimer. Part of the ribosomal stalk of the 50S ribosomal subunit. Forms a multimeric L10(L12)X complex, where L10 forms an elongated spine to which 2 to 4 L12 dimers bind in a sequential fashion. Binds GTP-bound translation factors.

In terms of biological role, forms part of the ribosomal stalk which helps the ribosome interact with GTP-bound translation factors. Is thus essential for accurate translation. This chain is Large ribosomal subunit protein bL12, found in Mycoplasma capricolum subsp. capricolum (strain California kid / ATCC 27343 / NCTC 10154).